We begin with the raw amino-acid sequence, 260 residues long: tRNA pseudouridine synthase A (260 aa).

D52 serves as the catalytic Nucleophile. Y110 is a substrate binding site.

The protein belongs to the tRNA pseudouridine synthase TruA family. In terms of assembly, homodimer.

The enzyme catalyses uridine(38/39/40) in tRNA = pseudouridine(38/39/40) in tRNA. Formation of pseudouridine at positions 38, 39 and 40 in the anticodon stem and loop of transfer RNAs. This is tRNA pseudouridine synthase A from Spiroplasma kunkelii.